Here is a 397-residue protein sequence, read N- to C-terminus: 8-amino-7-oxononanoate synthase (397 aa).

Substrate is bound at residue arginine 24. Glycine 110–tyrosine 111 is a binding site for pyridoxal 5'-phosphate. Histidine 135 is a substrate binding site. 3 residues coordinate pyridoxal 5'-phosphate: serine 183, histidine 211, and threonine 240. Lysine 243 bears the N6-(pyridoxal phosphate)lysine mark. Residue threonine 357 participates in substrate binding.

Belongs to the class-II pyridoxal-phosphate-dependent aminotransferase family. BioF subfamily. Homodimer. Requires pyridoxal 5'-phosphate as cofactor.

The enzyme catalyses 6-carboxyhexanoyl-[ACP] + L-alanine + H(+) = (8S)-8-amino-7-oxononanoate + holo-[ACP] + CO2. It functions in the pathway cofactor biosynthesis; biotin biosynthesis. Its function is as follows. Catalyzes the decarboxylative condensation of pimeloyl-[acyl-carrier protein] and L-alanine to produce 8-amino-7-oxononanoate (AON), [acyl-carrier protein], and carbon dioxide. This chain is 8-amino-7-oxononanoate synthase, found in Hydrogenovibrio crunogenus (strain DSM 25203 / XCL-2) (Thiomicrospira crunogena).